A 160-amino-acid polypeptide reads, in one-letter code: Ribosomal RNA large subunit methyltransferase H (160 aa).

S-adenosyl-L-methionine is bound at residue G108.

Belongs to the RNA methyltransferase RlmH family. Homodimer.

The protein resides in the cytoplasm. It carries out the reaction pseudouridine(1915) in 23S rRNA + S-adenosyl-L-methionine = N(3)-methylpseudouridine(1915) in 23S rRNA + S-adenosyl-L-homocysteine + H(+). Functionally, specifically methylates the pseudouridine at position 1915 (m3Psi1915) in 23S rRNA. In Rhodopseudomonas palustris (strain BisA53), this protein is Ribosomal RNA large subunit methyltransferase H.